Here is a 1649-residue protein sequence, read N- to C-terminus: Formin-like protein 20 (1649 aa).

The region spanning 1-194 (MALFRRFFYK…QYISRRNLGS (194 aa)) is the Phosphatase tensin-type domain. Cysteine 127 (phosphocysteine intermediate) is an active-site residue. The C2 tensin-type domain occupies 200–339 (DTPLLLDCLI…FKAEVLFSGA (140 aa)). Disordered regions lie at residues 416–774 (DCAS…PWKS) and 787–1245 (STSQ…QKKS). The segment covering 421–483 (DSNHKHDMHA…RRTVEAKEND (63 aa)) has biased composition (basic and acidic residues). Polar residues-rich tracts occupy residues 500-513 (LESMSQKTNTSLNK) and 585-597 (RINSAPASITTSL). The span at 598-616 (KDGKRATSPDGVIPKDAKT) shows a compositional bias: basic and acidic residues. Pro residues predominate over residues 648 to 662 (SLPPASPHQAPPPLP). Residues 665-678 (TSEAKTVLHSSQAV) show a composition bias toward polar residues. Composition is skewed to pro residues over residues 680-691 (SPPPPPPPPPLP), 701-711 (LPPPPPPPPPF), 722-732 (LPPPPPPPPPF), 743-752 (LPPPPPPPLP), and 795-804 (SPTPPPPPPA). Over residues 809-820 (GQKSSDLQTSQL) the composition is skewed to polar residues. Composition is skewed to pro residues over residues 821 to 832 (PSPPPPPPPPPF), 843 to 854 (LPPPPPPPPPPF), and 865 to 874 (LPPPPPPPPW). A compositionally biased stretch (polar residues) spans 878–890 (YASTFETHEACST). 3 stretches are compositionally biased toward pro residues: residues 893 to 904 (SPPPPPPPPPFS), 944 to 960 (PSPPVKTAPPPPPPPPF), and 968 to 1213 (SPPP…PPPM). The region spanning 1237-1635 (FGSAAQKKSS…KALKEAEMEK (399 aa)) is the FH2 domain.

This sequence belongs to the formin-like family. Class-II subfamily.

The sequence is that of Formin-like protein 20 (FH20) from Arabidopsis thaliana (Mouse-ear cress).